The chain runs to 232 residues: Zinc-finger homeodomain protein 5 (232 aa).

A compositionally biased stretch (acidic residues) spans 1–11 (MELSEHEEDAG). The segment at 1-25 (MELSEHEEDAGDVGGGCSSPPTPPH) is disordered. A ZF-HD dimerization-type; degenerate zinc finger spans residues 40-86 (YHECLRNHAAASGGHVVDGCGEFMPASTEEPLACAACGCHRSFHRRD). A disordered region spans residues 126–170 (GLPFPGYGTPSGGTGTTTASSSDERLRPSPVQPRRRSRTTFTREQ). Positions 159-222 (RRRSRTTFTR…NNKHSFKQKQ (64 aa)) form a DNA-binding region, homeobox.

In terms of assembly, homo- and heterodimer with other ZFHD proteins.

Its subcellular location is the nucleus. Functionally, putative transcription factor. In Oryza sativa subsp. japonica (Rice), this protein is Zinc-finger homeodomain protein 5 (ZHD5).